A 408-amino-acid polypeptide reads, in one-letter code: GTPase Obg (408 aa).

In terms of domain architecture, Obg spans methionine 1 to leucine 159. The tract at residues asparagine 127–arginine 150 is disordered. A compositionally biased stretch (polar residues) spans arginine 129–proline 143. The 174-residue stretch at alanine 160–glutamate 333 folds into the OBG-type G domain. GTP is bound by residues glycine 166 to serine 173, phenylalanine 191 to valine 195, aspartate 213 to glycine 216, asparagine 283 to aspartate 286, and serine 314 to isoleucine 316. Mg(2+) is bound by residues serine 173 and threonine 193. A disordered region spans residues histidine 382–aspartate 408. Residues glycine 385 to proline 401 show a composition bias toward acidic residues.

Belongs to the TRAFAC class OBG-HflX-like GTPase superfamily. OBG GTPase family. In terms of assembly, monomer. Mg(2+) serves as cofactor.

The protein localises to the cytoplasm. Functionally, an essential GTPase which binds GTP, GDP and possibly (p)ppGpp with moderate affinity, with high nucleotide exchange rates and a fairly low GTP hydrolysis rate. Plays a role in control of the cell cycle, stress response, ribosome biogenesis and in those bacteria that undergo differentiation, in morphogenesis control. The chain is GTPase Obg from Pseudomonas putida (strain GB-1).